A 539-amino-acid polypeptide reads, in one-letter code: 3-methylmercaptopropionyl-CoA ligase (539 aa).

Threonine 185 serves as a coordination point for Mg(2+). Histidine 231, glycine 303, histidine 324, alanine 325, and serine 329 together coordinate ATP. Glutamate 330 contacts Mg(2+). ATP-binding residues include glutamine 359, aspartate 417, arginine 432, and lysine 523.

The protein belongs to the ATP-dependent AMP-binding enzyme family. As to quaternary structure, homodimer. Requires Mg(2+) as cofactor.

It carries out the reaction 3-(methylsulfanyl)propanoate + ATP + CoA = 3-(methylsulfanyl)propanoyl-CoA + AMP + diphosphate. Its activity is regulated as follows. ADP acts as a competitive inhibitor and inhibits the ligase activity. Its function is as follows. Involved in the assimilation of dimethylsulphoniopropionate (DMSP), an important compound in the fixation of carbon in marine phytoplankton. Catalyzes the ATP-dependent ligation of methylmercaptopropionate (MMPA) and CoA to yield methylmercaptopropionate-CoA (MMPA-CoA). The polypeptide is 3-methylmercaptopropionyl-CoA ligase (Ruegeria lacuscaerulensis (strain DSM 11314 / KCTC 2953 / ITI-1157) (Silicibacter lacuscaerulensis)).